Here is a 301-residue protein sequence, read N- to C-terminus: GTP cyclohydrolase FolE2 (301 aa).

It belongs to the GTP cyclohydrolase IV family.

It carries out the reaction GTP + H2O = 7,8-dihydroneopterin 3'-triphosphate + formate + H(+). It participates in cofactor biosynthesis; 7,8-dihydroneopterin triphosphate biosynthesis; 7,8-dihydroneopterin triphosphate from GTP: step 1/1. In terms of biological role, converts GTP to 7,8-dihydroneopterin triphosphate. This is GTP cyclohydrolase FolE2 from Pseudomonas putida (strain GB-1).